The chain runs to 442 residues: Protein IQ-DOMAIN 33 (442 aa).

The 30-residue stretch at 159–188 (EEDAAVIIQSAFRSYLAIRRSKEEEETFAK) folds into the IQ domain. Residues 184–212 (ETFAKEESFSGEESQDNASMGTSLEAQTG) form a disordered region. Over residues 199 to 212 (DNASMGTSLEAQTG) the composition is skewed to polar residues. The interval 270 to 282 (RERALAYAFSQQL) is calmodulin-binding. The tract at residues 375–442 (EKSSFKPSIS…ETSHKLNSST (68 aa)) is disordered. The span at 383–402 (ISKRKSVPSYKSQRKHHKLQ) shows a compositional bias: basic residues. The Nuclear localization signal motif lies at 385–392 (KRKSVPSY).

It belongs to the IQD family. As to quaternary structure, binds to multiple calmodulin (CaM) in the presence of Ca(2+) and CaM-like proteins.

It localises to the nucleus. In terms of biological role, may be involved in cooperative interactions with calmodulins or calmodulin-like proteins. Recruits calmodulin proteins to microtubules, thus being a potential scaffold in cellular signaling and trafficking. May associate with nucleic acids and regulate gene expression at the transcriptional or post-transcriptional level. This Arabidopsis thaliana (Mouse-ear cress) protein is Protein IQ-DOMAIN 33.